The following is a 1039-amino-acid chain: Error-prone DNA polymerase (1039 aa).

This sequence belongs to the DNA polymerase type-C family. DnaE2 subfamily.

Its subcellular location is the cytoplasm. The catalysed reaction is DNA(n) + a 2'-deoxyribonucleoside 5'-triphosphate = DNA(n+1) + diphosphate. Its function is as follows. DNA polymerase involved in damage-induced mutagenesis and translesion synthesis (TLS). It is not the major replicative DNA polymerase. The polypeptide is Error-prone DNA polymerase (Corynebacterium diphtheriae (strain ATCC 700971 / NCTC 13129 / Biotype gravis)).